A 94-amino-acid chain; its full sequence is MLKPLGDRVVLKIEEKEQTVGGFVLAGSAQEKTKTAQVVATGQGVRTLNGDLVAPSVKPGDRVLVEAHAGIDVKDGDEKYIIVGEANILAIIEE.

This sequence belongs to the GroES chaperonin family. As to quaternary structure, heptamer of 7 subunits arranged in a ring. Interacts with the chaperonin GroEL.

The protein resides in the cytoplasm. Together with the chaperonin GroEL, plays an essential role in assisting protein folding. The GroEL-GroES system forms a nano-cage that allows encapsulation of the non-native substrate proteins and provides a physical environment optimized to promote and accelerate protein folding. GroES binds to the apical surface of the GroEL ring, thereby capping the opening of the GroEL channel. The sequence is that of Co-chaperonin GroES from Streptococcus oralis.